We begin with the raw amino-acid sequence, 210 residues long: Ras-related protein Rab-2-B (210 aa).

13-21 (GDTGVGKSC) is a GTP binding site. Residues 35–43 (HDLTIGVEF) carry the Effector region motif. GTP is bound by residues 61–65 (DTAGQ), 119–122 (NKCD), and 149–151 (SAK). Residues C208 and C209 are each lipidated (S-geranylgeranyl cysteine).

It belongs to the small GTPase superfamily. Rab family.

The protein resides in the endoplasmic reticulum membrane. Its subcellular location is the golgi apparatus membrane. Protein transport. Probably involved in vesicular traffic. This Zea mays (Maize) protein is Ras-related protein Rab-2-B (RAB2B).